Here is a 413-residue protein sequence, read N- to C-terminus: Ras association domain-containing protein 5 (413 aa).

The disordered stretch occupies residues 1 to 103 (MASPAIGQRP…RPRDVRSIFE (103 aa)). A compositionally biased stretch (basic and acidic residues) spans 52–74 (SEDRGGRRSGRRDPEPTPRDCRH). The Phorbol-ester/DAG-type zinc finger occupies 117 to 165 (GHRFVELALRGGPGWCDLCGREVLRQALRCANCKFTCHSECRSLIQLDC). 2 positions are modified to phosphoserine: serine 177 and serine 274. In terms of domain architecture, Ras-associating spans 265 to 359 (PAATTDKRTS…LSFVLKENET (95 aa)). Threonine 347 is modified (phosphothreonine). The region spanning 361-408 (EVEWDAFSIPELQNFLTILEKEEQDKIHQLQKKYNKFRQKLEEALRES) is the SARAH domain.

Interacts directly with activated HRAS; a RASSF5-STK4/MST1 complex probably associates with activated HRAS. Interacts with KRAS. Probably interacts with Ras-like GTPases RRAS, MRAS, RAP1B, RAP2A and RALA. Interacts with RRAS2. Can self-associate. Interacts with RSSF1 isoform A. The RSSF1 isoform A-RSSF5 heterodimer probably mediates the association of RSSF1 with HRAS. Isoform 2 interacts with activated RAP1A and ITGAL/LFA-1. Binds STK4/MST1, inhibiting STK4/MST1 autoactivation.

The protein localises to the cytoplasm. It localises to the cytoskeleton. Its function is as follows. Potential tumor suppressor. Seems to be involved in lymphocyte adhesion by linking RAP1A activation upon T-cell receptor or chemokine stimulation to integrin activation. Isoform 2 stimulates lymphocyte polarization and the patch-like distribution of ITGAL/LFA-1, resulting in an enhanced adhesion to ICAM1. Together with RAP1A may participate in regulation of microtubule growth. The association of isoform 2 with activated RAP1A is required for directional movement of endothelial cells during wound healing. May be involved in regulation of Ras apoptotic function. The RASSF5-STK4/MST1 complex may mediate HRAS and KRAS induced apoptosis. This is Ras association domain-containing protein 5 (Rassf5) from Mus musculus (Mouse).